Consider the following 130-residue polypeptide: Small ribosomal subunit protein uS8 (130 aa).

The protein belongs to the universal ribosomal protein uS8 family.

This is Small ribosomal subunit protein uS8 (rps22) from Agaricus bisporus (White button mushroom).